A 297-amino-acid polypeptide reads, in one-letter code: tRNA (guanine-N(7)-)-methyltransferase (297 aa).

Residues G101, 124-125 (EI), 171-172 (NT), and C191 contribute to the S-adenosyl-L-methionine site. D194 is a catalytic residue. 270-272 (TEE) contacts S-adenosyl-L-methionine.

This sequence belongs to the class I-like SAM-binding methyltransferase superfamily. TrmB family. In terms of assembly, forms a complex with trm82.

It is found in the nucleus. The enzyme catalyses guanosine(46) in tRNA + S-adenosyl-L-methionine = N(7)-methylguanosine(46) in tRNA + S-adenosyl-L-homocysteine. It functions in the pathway tRNA modification; N(7)-methylguanine-tRNA biosynthesis. Its function is as follows. Catalyzes the formation of N(7)-methylguanine at position 46 (m7G46) in tRNA. This is tRNA (guanine-N(7)-)-methyltransferase (trm8) from Aspergillus niger (strain ATCC MYA-4892 / CBS 513.88 / FGSC A1513).